We begin with the raw amino-acid sequence, 65 residues long: Large ribosomal subunit protein bL35 (65 aa).

Residues 1-65 form a disordered region; the sequence is MQKIKTNRSA…KELKRLLPGM (65 aa). Basic residues-rich tracts occupy residues 10–19 and 33–47; these read AAKRFKRTKS and LTKK…LRKS. Basic and acidic residues predominate over residues 54-65; the sequence is NNKELKRLLPGM.

It belongs to the bacterial ribosomal protein bL35 family.

The protein is Large ribosomal subunit protein bL35 of Desulfosudis oleivorans (strain DSM 6200 / JCM 39069 / Hxd3) (Desulfococcus oleovorans).